Consider the following 330-residue polypeptide: D-lactate dehydrogenase (330 aa).

NAD(+) contacts are provided by residues 156 to 157, D176, 206 to 207, 233 to 235, and D259; these read RI, VP, and AAR. R235 is an active-site residue. E264 is a catalytic residue. Residue H296 is the Proton donor of the active site.

It belongs to the D-isomer specific 2-hydroxyacid dehydrogenase family.

The enzyme catalyses (R)-lactate + NAD(+) = pyruvate + NADH + H(+). The polypeptide is D-lactate dehydrogenase (ldhD) (Staphylococcus aureus (strain Mu50 / ATCC 700699)).